Consider the following 248-residue polypeptide: Serine/arginine-rich splicing factor 1 (248 aa).

Residue Ser2 is modified to N-acetylserine. Ser2 is modified (phosphoserine). The region spanning 16–91 is the RRM 1 domain; it reads CRIYVGNLPP…YRLRVEFPRS (76 aa). Lys30 participates in a covalent cross-link: Glycyl lysine isopeptide (Lys-Gly) (interchain with G-Cter in SUMO2). Lys38 carries the post-translational modification N6-acetyllysine; alternate. Lys38 is covalently cross-linked (Glycyl lysine isopeptide (Lys-Gly) (interchain with G-Cter in SUMO2); alternate). The interval 88 to 134 is disordered; the sequence is FPRSGRGTGRGGGGGGGGGAPRGRYGPPSRRSENRVVVSGLPPSGSW. Asymmetric dimethylarginine; alternate is present on residues Arg93, Arg97, and Arg109. Residues Arg93, Arg97, and Arg109 each carry the omega-N-methylarginine; alternate modification. A compositionally biased stretch (gly residues) spans 93 to 108; it reads RGTGRGGGGGGGGGAP. Arg111 carries the omega-N-methylarginine modification. The 75-residue stretch at 121–195 folds into the RRM 2 domain; it reads NRVVVSGLPP…ETAYIRVKVD (75 aa). The residue at position 133 (Ser133) is a Phosphoserine. Lys179 bears the N6-acetyllysine mark. Positions 191–248 are disordered; the sequence is RVKVDGPRSPSYGRSRSRSRSRSRSRSRSNSRSRSYSPRRSRGSPRYSPRHSRSRSRT. The interval 198 to 247 is interaction with SAFB1; sequence RSPSYGRSRSRSRSRSRSRSRSNSRSRSYSPRRSRGSPRYSPRHSRSRSR. Ser199 and Ser201 each carry phosphoserine. Tyr202 carries the post-translational modification Phosphotyrosine. Residues Ser205, Ser207, Ser209, Ser231, Ser234, and Ser238 each carry the phosphoserine modification. Basic residues predominate over residues 205-248; it reads SRSRSRSRSRSRSRSNSRSRSYSPRRSRGSPRYSPRHSRSRSRT.

It belongs to the splicing factor SR family. Consists of two polypeptides of p32 and p33. Identified in the spliceosome C complex. Component of a ribonucleoprotein complex containing mRNAs and RNA-binding proteins including DDX5, HNRNPH2 and SRSF1 as well as splicing regulator ARVCF. In vitro, self-associates and binds SRSF2, SNRNP70 and U2AF1 but not U2AF2. Binds SREK1/SFRS12. Interacts with SAFB/SAFB1. Interacts with PSIP1/LEDGF. Interacts with RSRC1 (via Arg/Ser-rich domain). Interacts with ZRSR2/U2AF1-RS2. Interacts with CCDC55 (via C-terminus). Interacts with SRPK1 and a sliding docking interaction is essential for its sequential and processive phosphorylation by SRPK1. Interacts with NXF1. Interacts with CCNL1, CCNL2 and CDK11B. Interacts with RRP1B. Interacts (when phosphorylated in its RS domain) with TNPO3; promoting nuclear import. Interacts with ILDR1 (via C-terminus) and ILDR2. Post-translationally, phosphorylated by CLK1, CLK2, CLK3 and CLK4. Phosphorylated by SRPK1 at multiple serines in its RS domain via a directional (C-terminal to N-terminal) and a dual-track mechanism incorporating both processive phosphorylation (in which the kinase stays attached to the substrate after each round of phosphorylation) and distributive phosphorylation steps (in which the kinase and substrate dissociate after each phosphorylation event). The RS domain of SRSF1 binds to a docking groove in the large lobe of the kinase domain of SRPK1 and this induces certain structural changes in SRPK1 and/or RRM 2 domain of SRSF1, allowing RRM 2 to bind the kinase and initiate phosphorylation. The cycles continue for several phosphorylation steps in a processive manner (steps 1-8) until the last few phosphorylation steps (approximately steps 9-12). During that time, a mechanical stress induces the unfolding of the beta-4 motif in RRM 2, which then docks at the docking groove of SRPK1. This also signals RRM 2 to begin to dissociate, which facilitates SRSF1 dissociation after phosphorylation is completed. In terms of processing, asymmetrically dimethylated at arginines, probably by PRMT1, methylation promotes localization to nuclear speckles.

It localises to the cytoplasm. It is found in the nucleus speckle. Functionally, plays a role in preventing exon skipping, ensuring the accuracy of splicing and regulating alternative splicing. Interacts with other spliceosomal components, via the RS domains, to form a bridge between the 5'- and 3'-splice site binding components, U1 snRNP and U2AF. Can stimulate binding of U1 snRNP to a 5'-splice site-containing pre-mRNA. Binds to purine-rich RNA sequences, either the octamer, 5'-RGAAGAAC-3' (r=A or G) or the decamers, AGGACAGAGC/AGGACGAAGC. Binds preferentially to the 5'-CGAGGCG-3' motif in vitro. Three copies of the octamer constitute a powerful splicing enhancer in vitro, the ASF/SF2 splicing enhancer (ASE) which can specifically activate ASE-dependent splicing. May function as export adapter involved in mRNA nuclear export through the TAP/NXF1 pathway. The chain is Serine/arginine-rich splicing factor 1 (SRSF1) from Bos taurus (Bovine).